The sequence spans 375 residues: Erythronate-4-phosphate dehydrogenase (375 aa).

Substrate-binding residues include S45 and T66. 2 residues coordinate NAD(+): D146 and T175. R208 is an active-site residue. An NAD(+)-binding site is contributed by D232. E237 is an active-site residue. The active-site Proton donor is H254. G257 lines the NAD(+) pocket. Substrate is bound at residue Y258.

This sequence belongs to the D-isomer specific 2-hydroxyacid dehydrogenase family. PdxB subfamily. As to quaternary structure, homodimer.

Its subcellular location is the cytoplasm. It catalyses the reaction 4-phospho-D-erythronate + NAD(+) = (R)-3-hydroxy-2-oxo-4-phosphooxybutanoate + NADH + H(+). Its pathway is cofactor biosynthesis; pyridoxine 5'-phosphate biosynthesis; pyridoxine 5'-phosphate from D-erythrose 4-phosphate: step 2/5. In terms of biological role, catalyzes the oxidation of erythronate-4-phosphate to 3-hydroxy-2-oxo-4-phosphonooxybutanoate. This chain is Erythronate-4-phosphate dehydrogenase, found in Edwardsiella ictaluri (strain 93-146).